We begin with the raw amino-acid sequence, 775 residues long: Subtilisin-like protease SBT4.1 (775 aa).

The first 23 residues, 1–23, serve as a signal peptide directing secretion; it reads MAIAFHTFLLQLLLFFFASFAEA. Asparagine 24 is a glycosylation site (N-linked (GlcNAc...) asparagine). A propeptide spans 24–106 (activation peptide); that stretch reads NDSRKTYLVQ…VSRSRNLKLQ (83 aa). An Inhibitor I9 domain is found at 29-105; the sequence is TYLVQMKVGG…EVSRSRNLKL (77 aa). Residues 110-606 enclose the Peptidase S8 domain; sequence SWDFMNLTLK…SGHLNATKVR (497 aa). Residues asparagine 115 and asparagine 126 are each glycosylated (N-linked (GlcNAc...) asparagine). Aspartate 136 serves as the catalytic Charge relay system. An N-linked (GlcNAc...) asparagine glycan is attached at asparagine 162. Histidine 196 (charge relay system) is an active-site residue. Residues 365 to 459 form the PA domain; that stretch reads FYPLLNEKAP…FLDEQKKGKL (95 aa). The N-linked (GlcNAc...) asparagine glycan is linked to asparagine 437. Serine 551 functions as the Charge relay system in the catalytic mechanism. N-linked (GlcNAc...) asparagine glycosylation occurs at asparagine 601.

The protein belongs to the peptidase S8 family. The C-terminal propeptide is autocleaved.

It is found in the secreted. The polypeptide is Subtilisin-like protease SBT4.1 (Arabidopsis thaliana (Mouse-ear cress)).